A 338-amino-acid chain; its full sequence is tRNA N6-adenosine threonylcarbamoyltransferase (338 aa).

Fe cation-binding residues include His114 and His118. Substrate contacts are provided by residues 136-140, Asp169, Gly182, Asp186, and Asn275; that span reads LVSGG. Asp301 is a binding site for Fe cation.

The protein belongs to the KAE1 / TsaD family. The cofactor is Fe(2+).

The protein localises to the cytoplasm. It catalyses the reaction L-threonylcarbamoyladenylate + adenosine(37) in tRNA = N(6)-L-threonylcarbamoyladenosine(37) in tRNA + AMP + H(+). In terms of biological role, required for the formation of a threonylcarbamoyl group on adenosine at position 37 (t(6)A37) in tRNAs that read codons beginning with adenine. Is involved in the transfer of the threonylcarbamoyl moiety of threonylcarbamoyl-AMP (TC-AMP) to the N6 group of A37, together with TsaE and TsaB. TsaD likely plays a direct catalytic role in this reaction. This chain is tRNA N6-adenosine threonylcarbamoyltransferase, found in Streptococcus equi subsp. equi (strain 4047).